A 115-amino-acid chain; its full sequence is Large ribosomal subunit protein bL19 (115 aa).

This sequence belongs to the bacterial ribosomal protein bL19 family.

Its function is as follows. This protein is located at the 30S-50S ribosomal subunit interface and may play a role in the structure and function of the aminoacyl-tRNA binding site. The sequence is that of Large ribosomal subunit protein bL19 from Aeromonas hydrophila subsp. hydrophila (strain ATCC 7966 / DSM 30187 / BCRC 13018 / CCUG 14551 / JCM 1027 / KCTC 2358 / NCIMB 9240 / NCTC 8049).